A 502-amino-acid polypeptide reads, in one-letter code: ATP synthase subunit alpha (502 aa).

169 to 176 lines the ATP pocket; that stretch reads GDRQTGKT.

It belongs to the ATPase alpha/beta chains family. In terms of assembly, F-type ATPases have 2 components, CF(1) - the catalytic core - and CF(0) - the membrane proton channel. CF(1) has five subunits: alpha(3), beta(3), gamma(1), delta(1), epsilon(1). CF(0) has three main subunits: a(1), b(2) and c(9-12). The alpha and beta chains form an alternating ring which encloses part of the gamma chain. CF(1) is attached to CF(0) by a central stalk formed by the gamma and epsilon chains, while a peripheral stalk is formed by the delta and b chains.

The protein localises to the cell inner membrane. It carries out the reaction ATP + H2O + 4 H(+)(in) = ADP + phosphate + 5 H(+)(out). Its function is as follows. Produces ATP from ADP in the presence of a proton gradient across the membrane. The alpha chain is a regulatory subunit. This Solidesulfovibrio magneticus (strain ATCC 700980 / DSM 13731 / RS-1) (Desulfovibrio magneticus) protein is ATP synthase subunit alpha.